The chain runs to 501 residues: Cytochrome P450 4c21 (501 aa).

The heme site is built by Glu-309 and Cys-447.

Belongs to the cytochrome P450 family. Requires heme as cofactor.

The protein localises to the endoplasmic reticulum membrane. Its subcellular location is the microsome membrane. The catalysed reaction is an organic molecule + reduced [NADPH--hemoprotein reductase] + O2 = an alcohol + oxidized [NADPH--hemoprotein reductase] + H2O + H(+). In Blattella germanica (German cockroach), this protein is Cytochrome P450 4c21 (CYP4C21).